We begin with the raw amino-acid sequence, 209 residues long: N-(5'-phosphoribosyl)anthranilate isomerase (209 aa).

Belongs to the TrpF family.

The enzyme catalyses N-(5-phospho-beta-D-ribosyl)anthranilate = 1-(2-carboxyphenylamino)-1-deoxy-D-ribulose 5-phosphate. The protein operates within amino-acid biosynthesis; L-tryptophan biosynthesis; L-tryptophan from chorismate: step 3/5. This is N-(5'-phosphoribosyl)anthranilate isomerase from Staphylococcus carnosus (strain TM300).